We begin with the raw amino-acid sequence, 182 residues long: ATP-dependent protease subunit HslV (182 aa).

Residue threonine 12 is part of the active site. 3 residues coordinate Na(+): alanine 167, cysteine 170, and threonine 173.

It belongs to the peptidase T1B family. HslV subfamily. As to quaternary structure, a double ring-shaped homohexamer of HslV is capped on each side by a ring-shaped HslU homohexamer. The assembly of the HslU/HslV complex is dependent on binding of ATP.

The protein resides in the cytoplasm. The catalysed reaction is ATP-dependent cleavage of peptide bonds with broad specificity.. Its activity is regulated as follows. Allosterically activated by HslU binding. Its function is as follows. Protease subunit of a proteasome-like degradation complex believed to be a general protein degrading machinery. In Chlorobium limicola (strain DSM 245 / NBRC 103803 / 6330), this protein is ATP-dependent protease subunit HslV.